Here is a 464-residue protein sequence, read N- to C-terminus: tRNA modification GTPase MnmE (464 aa).

3 residues coordinate (6S)-5-formyl-5,6,7,8-tetrahydrofolate: Arg-25, Glu-87, and Lys-130. Residues 226–386 (GLSVVLAGQP…LRAELLRIAG (161 aa)) enclose the TrmE-type G domain. Asn-236 contributes to the K(+) binding site. Residues 236–241 (NVGKSS), 255–261 (TPIAGTT), and 280–283 (DTAG) each bind GTP. Ser-240 contributes to the Mg(2+) binding site. The K(+) site is built by Thr-255, Ile-257, and Thr-260. Thr-261 provides a ligand contact to Mg(2+). Lys-464 serves as a coordination point for (6S)-5-formyl-5,6,7,8-tetrahydrofolate.

The protein belongs to the TRAFAC class TrmE-Era-EngA-EngB-Septin-like GTPase superfamily. TrmE GTPase family. In terms of assembly, homodimer. Heterotetramer of two MnmE and two MnmG subunits. Requires K(+) as cofactor.

The protein resides in the cytoplasm. Functionally, exhibits a very high intrinsic GTPase hydrolysis rate. Involved in the addition of a carboxymethylaminomethyl (cmnm) group at the wobble position (U34) of certain tRNAs, forming tRNA-cmnm(5)s(2)U34. The polypeptide is tRNA modification GTPase MnmE (Burkholderia lata (strain ATCC 17760 / DSM 23089 / LMG 22485 / NCIMB 9086 / R18194 / 383)).